The sequence spans 243 residues: Trypsin (243 aa).

The signal sequence occupies residues 1–15 (MKFLLLCVLLGAAAA). Residues 16–20 (FDDDK) constitute a propeptide, activation peptide. One can recognise a Peptidase S1 domain in the interval 21-241 (IIGGATCAKS…YNAWIQNTIA (221 aa)). 6 disulfides stabilise this stretch: cysteine 27–cysteine 157, cysteine 45–cysteine 61, cysteine 129–cysteine 230, cysteine 136–cysteine 203, cysteine 168–cysteine 182, and cysteine 193–cysteine 217. The active-site Charge relay system is histidine 60. Positions 72, 74, and 82 each coordinate Ca(2+). Aspartate 104 functions as the Charge relay system in the catalytic mechanism. Serine 197 serves as the catalytic Charge relay system.

It belongs to the peptidase S1 family. The cofactor is Ca(2+).

The protein resides in the secreted. It localises to the extracellular space. It carries out the reaction Preferential cleavage: Arg-|-Xaa, Lys-|-Xaa.. This is Trypsin from Xenopus laevis (African clawed frog).